A 111-amino-acid chain; its full sequence is Toxin 3FTx-Tri3 (111 aa).

Residues 1 to 19 (MKTLLLALVVVAFMCLGSA) form the signal peptide. Positions 20–34 (DEVGLGNEQIDRGRR) are excised as a propeptide. Gln-35 is modified (pyrrolidone carboxylic acid). Disulfide bonds link Cys-44–Cys-68, Cys-47–Cys-87, Cys-91–Cys-102, and Cys-103–Cys-108.

The protein belongs to the three-finger toxin family. Ancestral subfamily. Boigatoxin sub-subfamily. In terms of tissue distribution, expressed by the venom gland.

The protein localises to the secreted. Functionally, potent postsynaptic neurotoxin. Displays readily reversible competitive antagonism at the nicotinic acetylcholine receptor (nAChR). This is Toxin 3FTx-Tri3 from Trimorphodon biscutatus (Western lyre snake).